The chain runs to 550 residues: Methyl-coenzyme M reductase I subunit alpha (550 aa).

Gln147 serves as a coordination point for coenzyme F430. Coenzyme B-binding positions include Arg225, 256–257 (KH), and Arg270. His257 bears the Pros-methylhistidine mark. Arg271 is subject to 5-methylarginine. Tyr333 is a binding site for coenzyme M. Gln400 is modified (2-methylglutamine). Residue Tyr444 participates in coenzyme M binding. Gly445 bears the 1-thioglycine mark. Asp450 is modified ((Z)-2,3-didehydroaspartate). At Cys452 the chain carries S-methylcysteine.

Belongs to the methyl-coenzyme M reductase alpha subunit family. In terms of assembly, MCR is a hexamer of two alpha, two beta, and two gamma chains, forming a dimer of heterotrimers. Coenzyme F430 is required as a cofactor. The alpha subunit contains six modified amino acids near the active site region. Is methylated on His-257, Arg-271, Gln-400 and Cys-452, probably by the action of specific S-adenosylmethionine-dependent methyltransferases. Also contains a thioglycine at position 445, forming a thiopeptide bond. Contains a didehydroaspartate residue at position 450. The methylation on C5 of Arg-271 is a post-translational methylation not essential in vivo, but which plays a role for the stability and structural integrity of MCR.

The protein resides in the cytoplasm. It carries out the reaction coenzyme B + methyl-coenzyme M = methane + coenzyme M-coenzyme B heterodisulfide. The protein operates within one-carbon metabolism; methyl-coenzyme M reduction; methane from methyl-coenzyme M: step 1/1. Methyl-coenzyme M reductase activity is inhibited by 3-nitrooxypropanol (3-NOP) in vitro and in vivo, by oxidation of its active site Ni(I), which stops both growth and methanogenesis. Is also inhibited by the reaction product CoM-S-S-CoB. In terms of biological role, component of the methyl-coenzyme M reductase (MCR) I that catalyzes the reductive cleavage of methyl-coenzyme M (CoM-S-CH3 or 2-(methylthio)ethanesulfonate) using coenzyme B (CoB or 7-mercaptoheptanoylthreonine phosphate) as reductant which results in the production of methane and the mixed heterodisulfide of CoB and CoM (CoM-S-S-CoB). This is the final step in methanogenesis. Neither N-6-mercaptohexanoylthreonine phosphate (H-S-HxoTP) nor N-8-mercaptooctanoylthreonine phosphate (H-SOcoTP) nor any other thiol compound such as CoA or CoM can substitute for CoB as the electron donor. In Methanothermobacter marburgensis (strain ATCC BAA-927 / DSM 2133 / JCM 14651 / NBRC 100331 / OCM 82 / Marburg) (Methanobacterium thermoautotrophicum), this protein is Methyl-coenzyme M reductase I subunit alpha (mcrA).